The chain runs to 246 residues: tRNA (guanine-N(7)-)-methyltransferase (246 aa).

Glu-77, Glu-102, Asp-129, and Asp-152 together coordinate S-adenosyl-L-methionine. Asp-152 is a catalytic residue. Residues Lys-156, Asp-188, and 225 to 228 (TKFE) each bind substrate.

Belongs to the class I-like SAM-binding methyltransferase superfamily. TrmB family.

The catalysed reaction is guanosine(46) in tRNA + S-adenosyl-L-methionine = N(7)-methylguanosine(46) in tRNA + S-adenosyl-L-homocysteine. It functions in the pathway tRNA modification; N(7)-methylguanine-tRNA biosynthesis. Its function is as follows. Catalyzes the formation of N(7)-methylguanine at position 46 (m7G46) in tRNA. This Haemophilus influenzae (strain PittEE) protein is tRNA (guanine-N(7)-)-methyltransferase.